Reading from the N-terminus, the 238-residue chain is 4-hydroxy-tetrahydrodipicolinate reductase (238 aa).

NAD(+) is bound at residue 12–17; sequence GASGRM. Arg40 provides a ligand contact to NADP(+). Residues 93–95 and 117–120 each bind NAD(+); these read GTT and ASNF. His149 functions as the Proton donor/acceptor in the catalytic mechanism. Residue His150 participates in (S)-2,3,4,5-tetrahydrodipicolinate binding. Lys153 (proton donor) is an active-site residue. 159-160 contributes to the (S)-2,3,4,5-tetrahydrodipicolinate binding site; it reads GT.

Belongs to the DapB family.

The protein localises to the cytoplasm. The enzyme catalyses (S)-2,3,4,5-tetrahydrodipicolinate + NAD(+) + H2O = (2S,4S)-4-hydroxy-2,3,4,5-tetrahydrodipicolinate + NADH + H(+). It carries out the reaction (S)-2,3,4,5-tetrahydrodipicolinate + NADP(+) + H2O = (2S,4S)-4-hydroxy-2,3,4,5-tetrahydrodipicolinate + NADPH + H(+). The protein operates within amino-acid biosynthesis; L-lysine biosynthesis via DAP pathway; (S)-tetrahydrodipicolinate from L-aspartate: step 4/4. Catalyzes the conversion of 4-hydroxy-tetrahydrodipicolinate (HTPA) to tetrahydrodipicolinate. This is 4-hydroxy-tetrahydrodipicolinate reductase from Xanthomonas axonopodis pv. citri (strain 306).